Here is a 396-residue protein sequence, read N- to C-terminus: L-lactate dehydrogenase (396 aa).

Residues 1–380 (MIISAASDYR…TQDSLVQGLG (380 aa)) enclose the FMN hydroxy acid dehydrogenase domain. Tyrosine 24 contacts substrate. 2 residues coordinate FMN: serine 106 and glutamine 127. Tyrosine 129 serves as a coordination point for substrate. Threonine 155 serves as a coordination point for FMN. Residue arginine 164 participates in substrate binding. Lysine 251 lines the FMN pocket. Residue histidine 275 is the Proton acceptor of the active site. Arginine 278 provides a ligand contact to substrate. 306 to 330 (DSGIRNGLDVVRMIALGADTVLLGR) contacts FMN.

It belongs to the FMN-dependent alpha-hydroxy acid dehydrogenase family. Requires FMN as cofactor.

It is found in the cell inner membrane. It carries out the reaction (S)-lactate + A = pyruvate + AH2. In terms of biological role, catalyzes the conversion of L-lactate to pyruvate. Is coupled to the respiratory chain. This is L-lactate dehydrogenase from Escherichia coli O127:H6 (strain E2348/69 / EPEC).